A 638-amino-acid chain; its full sequence is DNA gyrase subunit B (638 aa).

In terms of domain architecture, Toprim spans 422 to 536 (SELYIVEGDS…NGYVYIAQPP (115 aa)). 3 residues coordinate Mg(2+): glutamate 428, aspartate 501, and aspartate 503.

This sequence belongs to the type II topoisomerase GyrB family. As to quaternary structure, heterotetramer, composed of two GyrA and two GyrB chains. In the heterotetramer, GyrA contains the active site tyrosine that forms a transient covalent intermediate with DNA, while GyrB binds cofactors and catalyzes ATP hydrolysis. It depends on Mg(2+) as a cofactor. Mn(2+) is required as a cofactor. The cofactor is Ca(2+).

The protein localises to the cytoplasm. The enzyme catalyses ATP-dependent breakage, passage and rejoining of double-stranded DNA.. A type II topoisomerase that negatively supercoils closed circular double-stranded (ds) DNA in an ATP-dependent manner to modulate DNA topology and maintain chromosomes in an underwound state. Negative supercoiling favors strand separation, and DNA replication, transcription, recombination and repair, all of which involve strand separation. Also able to catalyze the interconversion of other topological isomers of dsDNA rings, including catenanes and knotted rings. Type II topoisomerases break and join 2 DNA strands simultaneously in an ATP-dependent manner. In Bacillus subtilis (strain 168), this protein is DNA gyrase subunit B.